A 138-amino-acid chain; its full sequence is MAKSIPRTGSRRNVRSGSRKSTRRIPKGVIHVQASFNNTIVTVTDVRGRVISWSSAGTCGFNGTRRGTPFAAQTAAGNAIRTVVDQGMQRAEVMIKGPGLGRDAALRAIRRSGILLSFVRDVTPMPHNGCRPPKKRRV.

The segment at 1-25 (MAKSIPRTGSRRNVRSGSRKSTRRI) is disordered. Basic residues predominate over residues 9-25 (GSRRNVRSGSRKSTRRI).

It belongs to the universal ribosomal protein uS11 family. Part of the 30S ribosomal subunit.

Its subcellular location is the plastid. It is found in the chloroplast. The protein is Small ribosomal subunit protein uS11c of Eucalyptus globulus subsp. globulus (Tasmanian blue gum).